A 612-amino-acid polypeptide reads, in one-letter code: Zinc metalloproteinase-disintegrin-like 2a (612 aa).

The first 20 residues, 1 to 20 (MIQVLLVTICLAVFPYQGSS), serve as a signal peptide directing secretion. Positions 21-189 (IILGSGNVND…KKASQLNLTP (169 aa)) are excised as a propeptide. Residues 199-395 (KYIELVIVAD…NRPPCILNKP (197 aa)) enclose the Peptidase M12B domain. Glu202 lines the Ca(2+) pocket. The N-linked (GlcNAc...) asparagine glycan is linked to Asn218. Asp286 contacts Ca(2+). 3 disulfides stabilise this stretch: Cys310/Cys390, Cys350/Cys374, and Cys352/Cys357. Zn(2+) is bound at residue His335. Residue Glu336 is part of the active site. His339 and His345 together coordinate Zn(2+). Positions 390, 393, 405, 408, 410, 412, 415, and 418 each coordinate Ca(2+). In terms of domain architecture, Disintegrin spans 403–489 (PPVCGNYFVE…DCPTDNFQRN (87 aa)). Cystine bridges form between Cys406/Cys435, Cys417/Cys430, Cys419/Cys425, Cys429/Cys452, Cys443/Cys449, Cys448/Cys474, Cys461/Cys481, Cys468/Cys500, Cys493/Cys505, Cys512/Cys562, Cys527/Cys573, Cys540/Cys550, Cys557/Cys599, and Cys593/Cys605. The D/ECD-tripeptide signature appears at 467 to 469 (ECD).

This sequence belongs to the venom metalloproteinase (M12B) family. P-III subfamily. The cofactor is Zn(2+). Expressed by the venom gland.

The protein resides in the secreted. Its function is as follows. Snake venom metalloproteinase that impairs hemostasis in the envenomed animal. In Crotalus adamanteus (Eastern diamondback rattlesnake), this protein is Zinc metalloproteinase-disintegrin-like 2a.